The following is a 39-amino-acid chain: Photosystem II reaction center protein J (39 aa).

The helical transmembrane segment at 9-29 (LWLVVTFGGIVVLTVLGIFIY) threads the bilayer.

This sequence belongs to the PsbJ family. As to quaternary structure, PSII is composed of 1 copy each of membrane proteins PsbA, PsbB, PsbC, PsbD, PsbE, PsbF, PsbH, PsbI, PsbJ, PsbK, PsbL, PsbM, PsbT, PsbY, PsbZ, Psb30/Ycf12, at least 3 peripheral proteins of the oxygen-evolving complex and a large number of cofactors. It forms dimeric complexes.

The protein localises to the plastid. Its subcellular location is the chloroplast thylakoid membrane. Its function is as follows. One of the components of the core complex of photosystem II (PSII). PSII is a light-driven water:plastoquinone oxidoreductase that uses light energy to abstract electrons from H(2)O, generating O(2) and a proton gradient subsequently used for ATP formation. It consists of a core antenna complex that captures photons, and an electron transfer chain that converts photonic excitation into a charge separation. In Cyanidium caldarium (Red alga), this protein is Photosystem II reaction center protein J.